We begin with the raw amino-acid sequence, 197 residues long: Thymidylate kinase (197 aa).

Residue 7–14 coordinates ATP; sequence GIDGSGKS.

This sequence belongs to the thymidylate kinase family.

It catalyses the reaction dTMP + ATP = dTDP + ADP. Its function is as follows. Phosphorylation of dTMP to form dTDP in both de novo and salvage pathways of dTTP synthesis. The polypeptide is Thymidylate kinase (Thermotoga sp. (strain RQ2)).